A 255-amino-acid polypeptide reads, in one-letter code: Pimeloyl-[acyl-carrier protein] methyl ester esterase (255 aa).

Residues 16–241 (LVLVHGWGMN…QSSHAPFMTE (226 aa)) form the AB hydrolase-1 domain. Substrate is bound by residues W22, 82–83 (SL), and 143–147 (FMALQ). S82 functions as the Nucleophile in the catalytic mechanism. Residues D207 and H235 contribute to the active site. H235 contributes to the substrate binding site.

The protein belongs to the AB hydrolase superfamily. Carboxylesterase BioH family. In terms of assembly, monomer.

Its subcellular location is the cytoplasm. The enzyme catalyses 6-carboxyhexanoyl-[ACP] methyl ester + H2O = 6-carboxyhexanoyl-[ACP] + methanol + H(+). It participates in cofactor biosynthesis; biotin biosynthesis. Its function is as follows. The physiological role of BioH is to remove the methyl group introduced by BioC when the pimeloyl moiety is complete. It allows to synthesize pimeloyl-ACP via the fatty acid synthetic pathway through the hydrolysis of the ester bonds of pimeloyl-ACP esters. In Vibrio cholerae serotype O1 (strain ATCC 39315 / El Tor Inaba N16961), this protein is Pimeloyl-[acyl-carrier protein] methyl ester esterase.